Reading from the N-terminus, the 409-residue chain is AT-rich interactive domain-containing protein 3C (409 aa).

Residues 1 to 14 show a composition bias toward low complexity; the sequence is MEALQRQQAARLAQ. A disordered region spans residues 1-91; the sequence is MEALQRQQAA…SPSSQSPGIQ (91 aa). Positions 19–30 are enriched in pro residues; it reads LAPPRLPLPQPP. The span at 49–70 shows a compositional bias: acidic residues; sequence AEEEEGAEDEEGETPLAEEETA. Positions 110–202 constitute an ARID domain; the sequence is DPKRKEFLDD…YLYPYECETR (93 aa). Disordered stretches follow at residues 233–274, 306–333, and 385–409; these read NLAG…PAHA, TREKLAPEEPPEKRAVLMGPVDSPRLGA, and PVPASLGPTNPPPLPSTGPPSSTLP. A compositionally biased stretch (low complexity) spans 235–257; it reads AGPTPRGAPGPASSHGPAPTATP. An REKLES domain is found at 301-386; it reads LASEATREKL…GILFARRQPV (86 aa). The span at 306-320 shows a compositional bias: basic and acidic residues; that stretch reads TREKLAPEEPPEKRA. A compositionally biased stretch (pro residues) spans 393–402; it reads TNPPPLPSTG.

As to quaternary structure, interacts (via REKLES DOMAIN) with NPM1; the interaction mediates ARID3C nuclear shuttling.

The protein resides in the nucleus. Functionally, transcription factor involved in monocyte-to-macrophage differentiation. Forms a complex with NPM1 to translocate to the nucleus, acting as a transcription factor that promotes the expression of the genes involved in macrophage differentiation, such as STAT3, STAT1 and JUNB. The polypeptide is AT-rich interactive domain-containing protein 3C (Arid3c) (Mus musculus (Mouse)).